We begin with the raw amino-acid sequence, 259 residues long: Thiazole synthase (259 aa).

The Schiff-base intermediate with DXP role is filled by Lys98. Residues Gly159, 185-186, and 207-208 each bind 1-deoxy-D-xylulose 5-phosphate; these read AG and NS.

Belongs to the ThiG family. In terms of assembly, homotetramer. Forms heterodimers with either ThiH or ThiS.

The protein resides in the cytoplasm. The catalysed reaction is [ThiS sulfur-carrier protein]-C-terminal-Gly-aminoethanethioate + 2-iminoacetate + 1-deoxy-D-xylulose 5-phosphate = [ThiS sulfur-carrier protein]-C-terminal Gly-Gly + 2-[(2R,5Z)-2-carboxy-4-methylthiazol-5(2H)-ylidene]ethyl phosphate + 2 H2O + H(+). Its pathway is cofactor biosynthesis; thiamine diphosphate biosynthesis. In terms of biological role, catalyzes the rearrangement of 1-deoxy-D-xylulose 5-phosphate (DXP) to produce the thiazole phosphate moiety of thiamine. Sulfur is provided by the thiocarboxylate moiety of the carrier protein ThiS. In vitro, sulfur can be provided by H(2)S. This Chlorobium phaeovibrioides (strain DSM 265 / 1930) (Prosthecochloris vibrioformis (strain DSM 265)) protein is Thiazole synthase.